The primary structure comprises 506 residues: Fe(3+)-transport system permease protein FbpB 2 (506 aa).

The next 12 helical transmembrane spans lie at 9–29 (LTLL…YVIL), 57–77 (LLMV…AFLL), 90–110 (VAMT…WISL), 116–136 (VFWG…YLPV), 174–194 (IGSS…AVSI), 218–238 (ALLS…EIFF), 275–295 (IFIL…IVGT), 314–334 (FIIS…LVWA), 350–370 (PYLL…YFSI), 379–399 (TFFV…QTTL), 428–448 (LTLP…FLNL), and 480–500 (AAAT…VFLL). Positions 52–233 (LSNTMLLMVC…LMAICILIVF (182 aa)) constitute an ABC transmembrane type-1 1 domain. The 191-residue stretch at 310–500 (FSNSFIISGL…LFSGIPVFLL (191 aa)) folds into the ABC transmembrane type-1 2 domain.

It belongs to the binding-protein-dependent transport system permease family. FbpB subfamily. The complex is composed of two ATP-binding proteins (FbpC), two transmembrane proteins (FbpB) and a solute-binding protein (FbpA).

Its subcellular location is the cell inner membrane. In terms of biological role, part of the ABC transporter complex FbpABC (TC 3.A.1.10.1) involved in Fe(3+) ions import. Probably responsible for the translocation of the substrate across the membrane. This chain is Fe(3+)-transport system permease protein FbpB 2 (fbpB2), found in Haemophilus influenzae (strain ATCC 51907 / DSM 11121 / KW20 / Rd).